The chain runs to 105 residues: DNA-directed RNA polymerase subunit omega (105 aa).

It belongs to the RNA polymerase subunit omega family. The RNAP catalytic core consists of 2 alpha, 1 beta, 1 beta' and 1 omega subunit. When a sigma factor is associated with the core the holoenzyme is formed, which can initiate transcription.

The catalysed reaction is RNA(n) + a ribonucleoside 5'-triphosphate = RNA(n+1) + diphosphate. Its function is as follows. Promotes RNA polymerase assembly. Latches the N- and C-terminal regions of the beta' subunit thereby facilitating its interaction with the beta and alpha subunits. This chain is DNA-directed RNA polymerase subunit omega, found in Streptococcus uberis (strain ATCC BAA-854 / 0140J).